A 103-amino-acid chain; its full sequence is Cyclotide vibi-I (103 aa).

The N-terminal stretch at 1–9 is a signal peptide; it reads AAFALPAFA. The propeptide occupies 10 to 69; the sequence is SFEKDVITPAALEAVLNRKAPLSNIMMENDAILNVIANVKTVISNPVLEEALLKTNHGVN. The segment at residues 70 to 99 is a cross-link (cyclopeptide (Gly-Asn)); sequence GIPCGESCVWIPCLTSTVGCSCKSKVCYRN. 3 disulfide bridges follow: Cys-73–Cys-89, Cys-77–Cys-91, and Cys-82–Cys-96. Positions 100-103 are excised as a propeptide; sequence SLDN.

Post-translationally, this is a cyclic peptide.

Its function is as follows. Probably participates in a plant defense mechanism. The protein is Cyclotide vibi-I of Viola biflora (Yellow wood violet).